The chain runs to 271 residues: Tetraspanin-11 (271 aa).

Topologically, residues 1 to 7 are cytoplasmic; sequence MFRVSNF. The helical transmembrane segment at 8–28 threads the bilayer; it reads MVGLANTLVMLVGASAIGYSI. The Extracellular portion of the chain corresponds to 29–44; it reads YMFVHQGVTDCESAIR. A helical membrane pass occupies residues 45-65; sequence IPLLTTGLILFLVSLLGVIGS. At 66–76 the chain is on the cytoplasmic side; the sequence is CFKENLAMVSY. Residues 77-97 traverse the membrane as a helical segment; it reads LIILFGGIVALMIFSIFLFFV. The Extracellular portion of the chain corresponds to 98 to 236; that stretch reads TNKGAGRVVS…LANIREKWRN (139 aa). N185 and N195 each carry an N-linked (GlcNAc...) asparagine glycan. The chain crosses the membrane as a helical span at residues 237–257; sequence LLVFNICLLILLITVYSCGCC. Residues 258–271 are Cytoplasmic-facing; it reads ARRNNRTARKSDSV.

It belongs to the tetraspanin (TM4SF) family.

Its subcellular location is the membrane. Functionally, may be involved in the regulation of cell differentiation. The sequence is that of Tetraspanin-11 (TET11) from Arabidopsis thaliana (Mouse-ear cress).